A 746-amino-acid polypeptide reads, in one-letter code: Double-stranded RNA-specific editase B2 (746 aa).

2 disordered regions span residues 1 to 36 and 50 to 105; these read MASV…KDKV and SPGT…PLEE. Positions 20–34 are enriched in basic residues; the sequence is CKSKRRRRRRSKRKD. Positions 23–35 are R-domain (ssRNA-binding); it reads KRRRRRRSKRKDK. DRBM domains lie at 126–192 and 284–348; these read TPKN…SFVQ and NPVV…ALFD. Positions 415–742 constitute an A to I editase domain; that stretch reads VLSSGTKCIS…VRKPPEQDQF (328 aa). H439 contributes to the Zn(2+) binding site. E441 acts as the Proton donor in catalysis. Zn(2+) is bound by residues C497 and C562.

Brain specific.

The protein localises to the nucleus. Its function is as follows. Lacks editing activity. It prevents the binding of other ADAR enzymes to targets in vitro, and decreases the efficiency of these enzymes. Capable of binding to dsRNA but also to ssRNA. The protein is Double-stranded RNA-specific editase B2 (Adarb2) of Rattus norvegicus (Rat).